The sequence spans 232 residues: Uracil-DNA glycosylase (232 aa).

The Proton acceptor role is filled by Asp-64.

The protein belongs to the uracil-DNA glycosylase (UDG) superfamily. UNG family.

The protein resides in the cytoplasm. It catalyses the reaction Hydrolyzes single-stranded DNA or mismatched double-stranded DNA and polynucleotides, releasing free uracil.. Functionally, excises uracil residues from the DNA which can arise as a result of misincorporation of dUMP residues by DNA polymerase or due to deamination of cytosine. This chain is Uracil-DNA glycosylase, found in Shouchella clausii (strain KSM-K16) (Alkalihalobacillus clausii).